The following is a 463-amino-acid chain: Xanthine permease XanP (463 aa).

12 helical membrane-spanning segments follow: residues 43 to 63, 71 to 91, 93 to 113, 126 to 146, 156 to 176, 192 to 212, 222 to 242, 260 to 280, 352 to 372, 379 to 399, 409 to 429, and 439 to 459; these read LLAM…ALGL, IISM…KAWG, VGSG…PLIM, PTMM…EMVI, IITP…LIQV, TFGA…IILL, VASL…MGML, LYYG…VFMI, GFVV…SGFV, VLGG…VRIV, ILII…PLIL, and LLSS…LIFP.

The protein belongs to the nucleobase:cation symporter-2 (NCS2) (TC 2.A.40) family.

It is found in the cell inner membrane. The enzyme catalyses xanthine(in) + H(+)(in) = xanthine(out) + H(+)(out). In terms of biological role, specific, proton motive force-dependent high-affinity transporter for xanthine. The chain is Xanthine permease XanP (xanP) from Escherichia coli O6:H1 (strain CFT073 / ATCC 700928 / UPEC).